The primary structure comprises 99 residues: Small ribosomal subunit protein bS18 (99 aa).

The tract at residues Met-1–Gln-25 is disordered.

This sequence belongs to the bacterial ribosomal protein bS18 family. In terms of assembly, part of the 30S ribosomal subunit. Forms a tight heterodimer with protein bS6.

In terms of biological role, binds as a heterodimer with protein bS6 to the central domain of the 16S rRNA, where it helps stabilize the platform of the 30S subunit. The sequence is that of Small ribosomal subunit protein bS18 from Solibacter usitatus (strain Ellin6076).